The chain runs to 29 residues: Cytochrome b6-f complex subunit 8 (29 aa).

The helical transmembrane segment at 3-23 (IVSLAWAVLMVVFTFSLSLVV) threads the bilayer.

This sequence belongs to the PetN family. In terms of assembly, the 4 large subunits of the cytochrome b6-f complex are cytochrome b6, subunit IV (17 kDa polypeptide, PetD), cytochrome f and the Rieske protein, while the 4 small subunits are PetG, PetL, PetM and PetN. The complex functions as a dimer.

It localises to the plastid. It is found in the chloroplast thylakoid membrane. Its function is as follows. Component of the cytochrome b6-f complex, which mediates electron transfer between photosystem II (PSII) and photosystem I (PSI), cyclic electron flow around PSI, and state transitions. This is Cytochrome b6-f complex subunit 8 from Drimys granadensis.